The sequence spans 478 residues: Protein nucleotidyltransferase YdiU (478 aa).

Residues Gly84, Gly86, Arg87, Lys107, Asp119, Gly120, Arg170, and Arg177 each contribute to the ATP site. Asp246 acts as the Proton acceptor in catalysis. Positions 247 and 256 each coordinate Mg(2+). Residue Asp256 participates in ATP binding.

The protein belongs to the SELO family. Requires Mg(2+) as cofactor. Mn(2+) is required as a cofactor.

The catalysed reaction is L-seryl-[protein] + ATP = 3-O-(5'-adenylyl)-L-seryl-[protein] + diphosphate. It catalyses the reaction L-threonyl-[protein] + ATP = 3-O-(5'-adenylyl)-L-threonyl-[protein] + diphosphate. The enzyme catalyses L-tyrosyl-[protein] + ATP = O-(5'-adenylyl)-L-tyrosyl-[protein] + diphosphate. It carries out the reaction L-histidyl-[protein] + UTP = N(tele)-(5'-uridylyl)-L-histidyl-[protein] + diphosphate. The catalysed reaction is L-seryl-[protein] + UTP = O-(5'-uridylyl)-L-seryl-[protein] + diphosphate. It catalyses the reaction L-tyrosyl-[protein] + UTP = O-(5'-uridylyl)-L-tyrosyl-[protein] + diphosphate. Its function is as follows. Nucleotidyltransferase involved in the post-translational modification of proteins. It can catalyze the addition of adenosine monophosphate (AMP) or uridine monophosphate (UMP) to a protein, resulting in modifications known as AMPylation and UMPylation. This Escherichia coli O6:K15:H31 (strain 536 / UPEC) protein is Protein nucleotidyltransferase YdiU.